The chain runs to 411 residues: UPF0761 membrane protein PSPA7_4558 (411 aa).

The next 6 membrane-spanning stretches (helical) occupy residues 36–56, 92–112, 132–152, 174–194, 207–229, and 244–264; these read LFAVVPMMTVMFSMLSLIPAF, HLTWVGVVFLAVTAFTMLVTI, FLLYWAILSLGPLLLGAGFAV, LLGLMPLAFSVAAFTLLYSAV, GGMFTAVLFEAAKTLFGLYVSLF, and IFLLWIYLSWMIVLFGAVLVC.

This sequence belongs to the UPF0761 family.

It localises to the cell inner membrane. This Pseudomonas paraeruginosa (strain DSM 24068 / PA7) (Pseudomonas aeruginosa (strain PA7)) protein is UPF0761 membrane protein PSPA7_4558.